The primary structure comprises 265 residues: Small ribosomal subunit protein uS2 (265 aa).

The interval 231-265 (VEEEYEDYEGSEEDYDYDETEYADSVIPEDGEEAE) is disordered.

This sequence belongs to the universal ribosomal protein uS2 family.

This chain is Small ribosomal subunit protein uS2, found in Nostoc sp. (strain PCC 7120 / SAG 25.82 / UTEX 2576).